A 944-amino-acid polypeptide reads, in one-letter code: MDTQIAITGVAVGKEINNDNSKTDQKVSLPKADVPCIDKATQTIIEGCSKDDPRLSYPTKLETTEKGKTKRNSFACVCCHSLKQKCEPSDVNDIYRKPCRRCLKHKKLCKFDLSKRTRKRKPRSRSPTPFESPMVNVSTKSKGPTDSEESSLKDGTSYLASFPSDPNAKQFPNSRTVLPGLQQSLSDLWSTLSQPPSYGAREAETTSTGEITTNNHTKSNGSVPTNPAVLASNDEHTNISDAPVIYSTYNSPVPISSAPTSINSEALFKHRPKIVGDEETQNVKVKRQKKSYSRHMTRSFRKQLQSLIISQKGKIRDISMKLDTWSKQWNDLVEKSMFLPTIADPVSVGIISHEEATLRLHLYKTEISYLSKLPFIKVEENVSVDELRKKKPILFSVIMSCVSIVLTPKQTTRGTIMKLDSFVLNLITNQIFKANNKSIEIIESLSTLCLWYNFFEWSSKTRYHIFNYICCCLTRDLGPTYVNRSFGMFSDEDPKRFKSPLELYSNGASLTLLVYISALNISIFLRQSIQARWSHVTEKACEDLVKETKKSRHYDNDKLLLDSADDPILVQFAKMNHVLENIHTHLHERDLNDDEFDDPIFTKKYLNKLMEKYHKQLQEIFTKLDRNRPRVIAFYYSVEAYLYQYKLAVFIGEMSHTINEKVELPREIMDDFVKCYHCCKSALEEFSKLEPILITSLPLFHTSRIIYTVGMLLLKLRYSVVAIPSFHDLMPLTDDAIALVIGVNNLLEKTSELYPFNNSLYKFRYVIALFCQTYANKVIDVADRYNAEREKLKEKQVIDEVSNGHDGTKPINAYVTESQKMPTEEDPIIDNNTNQNITAVPDEMLPVYSRVRDDTAAMNLNINSTSYMNESPHEHRESMTGTTLLPPPFISNDVTNSADSTNIKPSPSSSVDNLNDYLTDINSLAWGVNSLNDEFWTDLFMNDI.

The segment at residues 76–109 (CVCCHSLKQKCEPSDVNDIYRKPCRRCLKHKKLC) is a DNA-binding region (zn(2)-C6 fungal-type). Disordered regions lie at residues 114–171 (SKRT…AKQF) and 197–225 (SYGA…SVPT). Thr-128 carries the phosphothreonine modification. 2 stretches are compositionally biased toward polar residues: residues 135–144 (VNVSTKSKGP) and 205–225 (TTST…SVPT).

In terms of assembly, homodimer. Post-translationally, phosphorylation is required for PDR12 induction.

The protein resides in the nucleus. In terms of biological role, transcription factor which binds to a weak acid response element (WARE) to mediate stress induction of PDR12 and FUN34, encoding an acid transporter and a putative ammonia transporter, respectively. This chain is Weak acid resistance protein 1 (WAR1), found in Saccharomyces cerevisiae (strain ATCC 204508 / S288c) (Baker's yeast).